The primary structure comprises 2096 residues: Tudor domain-containing protein 6 (2096 aa).

Positions 65–120 (ASASPGELCLVQVGLLWHRCRVVSRQAQESRVFLLDEGRTITAGAGSLAPGRREFF) constitute a Tudor 1 domain. Residues 287–316 (YRGSTGTGDENSTSATWEEREESPDKPGSP) are disordered. Positions 288-302 (RGSTGTGDENSTSAT) are enriched in polar residues. Phosphothreonine is present on threonine 293. Tudor domains lie at 310–369 (PDKP…YFRM), 536–593 (KPEP…FRQL), 816–875 (HQRN…FLKV), 1033–1088 (PLNP…AYDV), 1352–1411 (PLQR…NAIL), and 1567–1626 (CPYI…ELLS). Phosphoserine occurs at positions 1722 and 2062. The 59-residue stretch at 2026–2084 (AFTVGSKCVVWSSLRNTWSKCEILETAEEGTRVLNLSNGMEEIVNPENVWNGIPKLDKS) folds into the Tudor 8 domain.

Found in a mRNP complex (i.e. messenger ribonucleoproteins which correspond to mRNA with bound proteins), at least composed of TDRD1, TDRD6, TDRD7 and DDX4. Found in a complex, at least composed of PIWIL1, PIWIL2, DDX4 and TDRD6. Interacts with Tex19.1 and probably Tex19.2. Interacts with PRMT5. Interacts with SNRPB (when methylated); to trigger spliceosome formation. Undergoes proteolytic cleavage near the C-terminal by an unknown protease during the transition from meiosis I to meiosis II in primary spermatocytes.

It localises to the cytoplasm. In terms of biological role, tudor domain-containing protein involved in germ cell development, more specifically the formation of chromatoid body (during spermiogenesis), Balbiani body (during oogenesis), germ plasm (upon fertilization), and for proper miRNA expression and spliceosome maturation. Essential for RNA-dependent helicase UPF1 localization to chromatoid body, for UPF1-UPF2 and UPF1-DDX4 interactions which are required for mRNA degradation, using the extended 3' UTR-triggered nonsense-mediated mRNA decay (NMD) pathway. Involved in spliceosome maturation and mRNA splicing in prophase I spermatocytes through interaction with arginine N-methyltransferase PRMT5 and symmetrically arginine dimethylated SNRPB (small nuclear ribonucleoprotein-associated protein). The protein is Tudor domain-containing protein 6 of Homo sapiens (Human).